Reading from the N-terminus, the 1502-residue chain is Nucleoporin NUP170 (1502 aa).

A disordered region spans residues 1–31; that stretch reads MFQSFFHNNGPAAAGETFSDSRSYPLTNHQE. Residues 18–30 show a composition bias toward polar residues; the sequence is FSDSRSYPLTNHQ. The tract at residues 233–261 is leucine-zipper; it reads LISTTMELFMFAISLDKATNELSVFNTHL. Position 1247 is a phosphoserine (Ser-1247).

It belongs to the non-repetitive/WGA-negative nucleoporin family. As to quaternary structure, component of the nuclear pore complex (NPC). NPC constitutes the exclusive means of nucleocytoplasmic transport. NPCs allow the passive diffusion of ions and small molecules and the active, nuclear transport receptor-mediated bidirectional transport of macromolecules such as proteins, RNAs, ribonucleoparticles (RNPs), and ribosomal subunits across the nuclear envelope. Due to its 8-fold rotational symmetry, all subunits are present with 8 copies or multiples thereof. During mitosis NUP53 changes its binding partner within the NPC from NUP170 to NIC96, exposing a high affinity binding site for the karyopherin PSE1, and retaining it in the NPC.

It is found in the nucleus. It localises to the nuclear pore complex. Its subcellular location is the nucleus membrane. Functions as a component of the nuclear pore complex (NPC). NPC components, collectively referred to as nucleoporins (NUPs), can play the role of both NPC structural components and of docking or interaction partners for transiently associated nuclear transport factors. NUP170 probably plays an important role in NPC assembly and organization. In addition it is required for chromosome transmission fidelity. This Saccharomyces cerevisiae (strain ATCC 204508 / S288c) (Baker's yeast) protein is Nucleoporin NUP170 (NUP170).